The primary structure comprises 291 residues: ATP synthase gamma chain (291 aa).

Belongs to the ATPase gamma chain family. F-type ATPases have 2 components, CF(1) - the catalytic core - and CF(0) - the membrane proton channel. CF(1) has five subunits: alpha(3), beta(3), gamma(1), delta(1), epsilon(1). CF(0) has three main subunits: a, b and c.

It is found in the cell membrane. Its function is as follows. Produces ATP from ADP in the presence of a proton gradient across the membrane. The gamma chain is believed to be important in regulating ATPase activity and the flow of protons through the CF(0) complex. The sequence is that of ATP synthase gamma chain from Streptococcus equi subsp. equi (strain 4047).